Reading from the N-terminus, the 288-residue chain is Alpha/beta hydrolase domain-containing protein 17B (288 aa).

Catalysis depends on charge relay system residues Ser170, Asp235, and His264. The residue at position 282 (Ser282) is a Phosphoserine.

This sequence belongs to the AB hydrolase superfamily. ABHD17 family. Palmitoylated on cysteine residues located in a cysteine cluster at the N-terminus which promotes membrane localization. Palmitoylation is required for post-synaptic localization and for depalmitoylating activity towards DLG4/PSD95. As to expression, expressed in brain.

It localises to the cell membrane. It is found in the recycling endosome membrane. The protein localises to the cell projection. Its subcellular location is the dendritic spine. The protein resides in the postsynaptic density membrane. It catalyses the reaction S-hexadecanoyl-L-cysteinyl-[protein] + H2O = L-cysteinyl-[protein] + hexadecanoate + H(+). Functionally, hydrolyzes fatty acids from S-acylated cysteine residues in proteins. Has depalmitoylating activity towards DLG4/PSD95. Has depalmitoylating activity towards GAP43. Has depalmitoylating activity towards MAP6. Has depalmitoylating activity towards NRAS. The chain is Alpha/beta hydrolase domain-containing protein 17B from Mus musculus (Mouse).